The following is a 457-amino-acid chain: Siroheme synthase (457 aa).

Residues 1–204 (MDHLPIFCQL…ADEKAVNATT (204 aa)) form a precorrin-2 dehydrogenase /sirohydrochlorin ferrochelatase region. NAD(+)-binding positions include 22–23 (DV) and 43–44 (LT). The residue at position 128 (S128) is a Phosphoserine. Residues 216 to 457 (GEVVLVGAGP…RDKLNWFSNY (242 aa)) form a uroporphyrinogen-III C-methyltransferase region. P225 provides a ligand contact to S-adenosyl-L-methionine. Catalysis depends on D248, which acts as the Proton acceptor. The active-site Proton donor is the K270. Residues 301–303 (GGD), I306, 331–332 (TA), M382, and G411 each bind S-adenosyl-L-methionine.

The protein in the N-terminal section; belongs to the precorrin-2 dehydrogenase / sirohydrochlorin ferrochelatase family. It in the C-terminal section; belongs to the precorrin methyltransferase family.

It carries out the reaction uroporphyrinogen III + 2 S-adenosyl-L-methionine = precorrin-2 + 2 S-adenosyl-L-homocysteine + H(+). The catalysed reaction is precorrin-2 + NAD(+) = sirohydrochlorin + NADH + 2 H(+). It catalyses the reaction siroheme + 2 H(+) = sirohydrochlorin + Fe(2+). It participates in cofactor biosynthesis; adenosylcobalamin biosynthesis; precorrin-2 from uroporphyrinogen III: step 1/1. The protein operates within cofactor biosynthesis; adenosylcobalamin biosynthesis; sirohydrochlorin from precorrin-2: step 1/1. It functions in the pathway porphyrin-containing compound metabolism; siroheme biosynthesis; precorrin-2 from uroporphyrinogen III: step 1/1. Its pathway is porphyrin-containing compound metabolism; siroheme biosynthesis; siroheme from sirohydrochlorin: step 1/1. It participates in porphyrin-containing compound metabolism; siroheme biosynthesis; sirohydrochlorin from precorrin-2: step 1/1. Its function is as follows. Multifunctional enzyme that catalyzes the SAM-dependent methylations of uroporphyrinogen III at position C-2 and C-7 to form precorrin-2 via precorrin-1. Then it catalyzes the NAD-dependent ring dehydrogenation of precorrin-2 to yield sirohydrochlorin. Finally, it catalyzes the ferrochelation of sirohydrochlorin to yield siroheme. In Salmonella dublin (strain CT_02021853), this protein is Siroheme synthase.